The following is a 236-amino-acid chain: Orotidine 5'-phosphate decarboxylase (236 aa).

Residues Asp-12, Lys-34, 60–69 (DLKLHDIPHT), Thr-123, Arg-184, Gln-193, Gly-213, and Arg-214 contribute to the substrate site. Residue Lys-62 is the Proton donor of the active site.

Belongs to the OMP decarboxylase family. Type 1 subfamily. In terms of assembly, homodimer.

The enzyme catalyses orotidine 5'-phosphate + H(+) = UMP + CO2. It functions in the pathway pyrimidine metabolism; UMP biosynthesis via de novo pathway; UMP from orotate: step 2/2. In terms of biological role, catalyzes the decarboxylation of orotidine 5'-monophosphate (OMP) to uridine 5'-monophosphate (UMP). This Gluconobacter oxydans (strain 621H) (Gluconobacter suboxydans) protein is Orotidine 5'-phosphate decarboxylase.